Consider the following 124-residue polypeptide: UPF0102 protein HCH_05895 (124 aa).

It belongs to the UPF0102 family.

The polypeptide is UPF0102 protein HCH_05895 (Hahella chejuensis (strain KCTC 2396)).